The following is a 354-amino-acid chain: ORC1-type DNA replication protein 9 (354 aa).

ATP-binding positions include 63-67 (TGKTC), Tyr-195, and Arg-207.

It belongs to the CDC6/cdc18 family.

Its function is as follows. Involved in regulation of DNA replication. This is ORC1-type DNA replication protein 9 (orc9-1) from Halobacterium salinarum (strain ATCC 700922 / JCM 11081 / NRC-1) (Halobacterium halobium).